The chain runs to 99 residues: Putative septation protein SpoVG (99 aa).

Belongs to the SpoVG family.

Could be involved in septation. This chain is Putative septation protein SpoVG, found in Exiguobacterium sp. (strain ATCC BAA-1283 / AT1b).